We begin with the raw amino-acid sequence, 307 residues long: tRNA dimethylallyltransferase (307 aa).

An ATP-binding site is contributed by 11–18 (GPTGSGKT). 13 to 18 (TGSGKT) is a binding site for substrate. The tract at residues 36–39 (DSVA) is interaction with substrate tRNA.

The protein belongs to the IPP transferase family. Monomer. Requires Mg(2+) as cofactor.

The catalysed reaction is adenosine(37) in tRNA + dimethylallyl diphosphate = N(6)-dimethylallyladenosine(37) in tRNA + diphosphate. Catalyzes the transfer of a dimethylallyl group onto the adenine at position 37 in tRNAs that read codons beginning with uridine, leading to the formation of N6-(dimethylallyl)adenosine (i(6)A). This is tRNA dimethylallyltransferase from Koribacter versatilis (strain Ellin345).